Here is a 245-residue protein sequence, read N- to C-terminus: Carbohydrate deacetylase (245 aa).

2 residues coordinate Mg(2+): H61 and H122.

This sequence belongs to the YdjC deacetylase family. Mg(2+) serves as cofactor.

Its function is as follows. Probably catalyzes the deacetylation of acetylated carbohydrates an important step in the degradation of oligosaccharides. This Geobacillus stearothermophilus (Bacillus stearothermophilus) protein is Carbohydrate deacetylase (celC).